The primary structure comprises 1352 residues: Patatin-like phospholipase domain-containing protein 7 (1352 aa).

Topologically, residues 1-36 (MQNEEDACLEAGYCLGTTLSSWRLHFMEEQSQSTML) are lumenal. The chain crosses the membrane as a helical span at residues 37–57 (MGIGIGALLTLAFVGITFFFV). Residues 58–1352 (YRRVRRLRRA…DQGPRLEHPS (1295 aa)) lie on the Cytoplasmic side of the membrane. A nucleoside 3',5'-cyclic phosphate is bound at residue 170-297 (VLGHFEKPLF…VRVVQIIMVR (128 aa)). Residues 340 to 364 (MSYGPEEQLERSLRPSEFSSSDHGS) form a disordered region. Serine 341 and serine 379 each carry phosphoserine. The segment at 384–411 (SNHGEVDELRQSQGSGSNTSAFQESHEG) is disordered. Polar residues predominate over residues 394–406 (QSQGSGSNTSAFQ). A nucleoside 3',5'-cyclic phosphate-binding positions include 499 to 585 (FLHV…YEIM) and 613 to 718 (ALDW…LGEK). Residues 681–967 (VHAVRDSELA…RGCAQVGILR (287 aa)) form an involved in the binding to lipid droplets region. The PNPLA domain occupies 950 to 1116 (LVLGGGGARG…INNLPADVAR (167 aa)). The GXGXXG signature appears at 954–959 (GGGARG). The short motif at 981–985 (GTSIG) is the GXSXG element. Serine 983 functions as the Nucleophile in the catalytic mechanism. Residue aspartate 1103 is the Proton acceptor of the active site. The DGA/G motif lies at 1103-1105 (DGG). At serine 1280 the chain carries Phosphoserine. Threonine 1284 is subject to Phosphothreonine. Residues 1295-1352 (KETYADFQSTGIELDSDSEYEPSMLQGPPSLTSPEQSQDSFPWLPNQDDQGPRLEHPS) are disordered. Positions 1323–1334 (PSLTSPEQSQDS) are enriched in polar residues.

The protein belongs to the NTE family. Expressed in white and brown adipose tissue, cardiac muscle, skeletal muscle, and testis. As to expression, expressed in white adipose tissue, cardiac muscle, skeletal muscle, and testis.

It localises to the endoplasmic reticulum membrane. It is found in the lipid droplet. The catalysed reaction is a 1-acyl-sn-glycero-3-phosphocholine + H2O = sn-glycerol 3-phosphocholine + a fatty acid + H(+). It catalyses the reaction 1-(9Z-octadecenoyl)-sn-glycero-3-phosphocholine + H2O = sn-glycerol 3-phosphocholine + (9Z)-octadecenoate + H(+). It carries out the reaction 1-(9Z-octadecenoyl)-sn-glycero-3-phosphoethanolamine + H2O = sn-glycero-3-phosphoethanolamine + (9Z)-octadecenoate + H(+). The enzyme catalyses 1-(9Z-octadecenoyl)-sn-glycero-3-phospho-L-serine + H2O = sn-glycero-3-phospho-L-serine + (9Z)-octadecenoate + H(+). The catalysed reaction is 1-hexadecanoyl-sn-glycero-3-phosphocholine + H2O = sn-glycerol 3-phosphocholine + hexadecanoate + H(+). It catalyses the reaction 1-hexadecanoyl-sn-glycero-3-phosphate + H2O = sn-glycerol 3-phosphate + hexadecanoate + H(+). Its activity is regulated as follows. cAMP does not regulate lysophospholipase activity in vitro. Slightly inhibited by organophosphorus (OP) compounds such as mipafox, which is likely why mice are less sensitive to distal axonophathy induced by OPs compared to humans. Lysophospholipase which preferentially deacylates unsaturated lysophosphatidylcholine (C18:1), generating glycerophosphocholine. Can also deacylate, to a lesser extent, lysophosphatidylethanolamine (C18:1), lysophosphatidyl-L-serine (C18:1) and lysophosphatidic acid (C16:0). Functionally, lysophospholipase. In terms of biological role, lacks lysophospholipase activity. The chain is Patatin-like phospholipase domain-containing protein 7 (Pnpla7) from Mus musculus (Mouse).